The sequence spans 355 residues: GPN-loop GTPase 1 (355 aa).

Positions 1–30 (MAEKAENLPSSSAEASEEPSPQTGPNVNQK) are disordered. Over residues 9–21 (PSSSAEASEEPSP) the composition is skewed to low complexity. A GTP-binding site is contributed by 40–45 (GSGKTT). Positions 97-99 (GPN) match the Gly-Pro-Asn (GPN)-loop; involved in dimer interface motif. 200 to 203 (NKAD) is a GTP binding site. Positions 286 to 311 (EKVLAEKKLLDEEERKKRDEETLKGK) form a coiled coil.

It belongs to the GPN-loop GTPase family. As to quaternary structure, heterodimer with GPN3. Binds to RNA polymerase II (RNAPII).

It localises to the cytoplasm. The protein localises to the nucleus. In terms of biological role, small GTPase required for proper nuclear import of RNA polymerase II (RNAPII). May act at an RNAP assembly step prior to nuclear import. The chain is GPN-loop GTPase 1 from Caenorhabditis elegans.